We begin with the raw amino-acid sequence, 393 residues long: Polygalacturonase (393 aa).

The N-terminal stretch at 1 to 23 (MANRRSLFSLSLIFVFMINSAIA) is a signal peptide. PbH1 repeat units lie at residues 115-136 (VNGV…WACK), 178-204 (FQNV…HVQM), 205-226 (SSGV…SIGP), 228-248 (TSNL…SIGS), 258-279 (VQNV…RIKS), and 288-309 (ARNI…VIDQ). D219 acts as the Proton donor in catalysis. The cysteines at positions 221 and 238 are disulfide-linked. The active site involves H242. N260 carries N-linked (GlcNAc...) asparagine glycosylation. 2 disulfides stabilise this stretch: C349–C355 and C376–C392.

Belongs to the glycosyl hydrolase 28 family.

It is found in the secreted. Its subcellular location is the cell wall. The catalysed reaction is (1,4-alpha-D-galacturonosyl)n+m + H2O = (1,4-alpha-D-galacturonosyl)n + (1,4-alpha-D-galacturonosyl)m.. In terms of biological role, acts in concert with the pectinesterase, in the ripening process. Is involved in cell wall metabolism, specifically in polyuronide degradation. The sequence is that of Polygalacturonase from Prunus persica (Peach).